The primary structure comprises 360 residues: Phospho-N-acetylmuramoyl-pentapeptide-transferase (360 aa).

The next 10 helical transmembrane spans lie at 26 to 46, 70 to 90, 97 to 117, 134 to 154, 167 to 187, 199 to 219, 236 to 256, 263 to 283, 288 to 308, and 338 to 358; these read AILG…WVIN, GTPT…TLLW, YVLA…VDDY, YFWQ…TAQI, GVAL…VVGF, GLAI…AYLV, AGEL…FLWF, VFMG…IAVI, IVFI…ILQV, and VIVR…ATLK.

It belongs to the glycosyltransferase 4 family. MraY subfamily. Mg(2+) serves as cofactor.

It is found in the cell inner membrane. The catalysed reaction is UDP-N-acetyl-alpha-D-muramoyl-L-alanyl-gamma-D-glutamyl-meso-2,6-diaminopimeloyl-D-alanyl-D-alanine + di-trans,octa-cis-undecaprenyl phosphate = di-trans,octa-cis-undecaprenyl diphospho-N-acetyl-alpha-D-muramoyl-L-alanyl-D-glutamyl-meso-2,6-diaminopimeloyl-D-alanyl-D-alanine + UMP. It functions in the pathway cell wall biogenesis; peptidoglycan biosynthesis. In terms of biological role, catalyzes the initial step of the lipid cycle reactions in the biosynthesis of the cell wall peptidoglycan: transfers peptidoglycan precursor phospho-MurNAc-pentapeptide from UDP-MurNAc-pentapeptide onto the lipid carrier undecaprenyl phosphate, yielding undecaprenyl-pyrophosphoryl-MurNAc-pentapeptide, known as lipid I. In Saccharophagus degradans (strain 2-40 / ATCC 43961 / DSM 17024), this protein is Phospho-N-acetylmuramoyl-pentapeptide-transferase.